The sequence spans 387 residues: 3-ketoacyl-CoA thiolase (387 aa).

C91 functions as the Acyl-thioester intermediate in the catalytic mechanism. Residues H343 and C373 each act as proton acceptor in the active site.

Belongs to the thiolase-like superfamily. Thiolase family. In terms of assembly, heterotetramer of two alpha chains (FadB) and two beta chains (FadA).

Its subcellular location is the cytoplasm. The catalysed reaction is an acyl-CoA + acetyl-CoA = a 3-oxoacyl-CoA + CoA. It participates in lipid metabolism; fatty acid beta-oxidation. Catalyzes the final step of fatty acid oxidation in which acetyl-CoA is released and the CoA ester of a fatty acid two carbons shorter is formed. In Shewanella oneidensis (strain ATCC 700550 / JCM 31522 / CIP 106686 / LMG 19005 / NCIMB 14063 / MR-1), this protein is 3-ketoacyl-CoA thiolase.